The chain runs to 435 residues: Serine/threonine-protein kinase 40 (435 aa).

The span at 1–10 (MKRRASDRGA) shows a compositional bias: basic and acidic residues. The interval 1-25 (MKRRASDRGAGETSARAKALGSGIS) is disordered. In terms of domain architecture, Protein kinase spans 35-332 (FILGPRLGNS…DVLEALSAII (298 aa)). ATP is bound by residues 41 to 49 (LGNSPVPSI) and lysine 66. The Proton acceptor role is filled by aspartate 197.

Belongs to the protein kinase superfamily. CAMK Ser/Thr protein kinase family.

The protein localises to the nucleus. It localises to the cytoplasm. The enzyme catalyses L-seryl-[protein] + ATP = O-phospho-L-seryl-[protein] + ADP + H(+). The catalysed reaction is L-threonyl-[protein] + ATP = O-phospho-L-threonyl-[protein] + ADP + H(+). Functionally, may be a negative regulator of NF-kappa-B and p53-mediated gene transcription. The polypeptide is Serine/threonine-protein kinase 40 (STK40) (Pongo abelii (Sumatran orangutan)).